The chain runs to 115 residues: Large ribosomal subunit protein bL20c (115 aa).

The protein belongs to the bacterial ribosomal protein bL20 family.

The protein resides in the plastid. It localises to the chloroplast. Binds directly to 23S ribosomal RNA and is necessary for the in vitro assembly process of the 50S ribosomal subunit. It is not involved in the protein synthesizing functions of that subunit. The polypeptide is Large ribosomal subunit protein bL20c (Pleurastrum terricola (Filamentous green alga)).